The chain runs to 538 residues: ESX-3 secretion system ATPase EccB3 (538 aa).

Positions 1–16 (MTNQQHDHDFDHDRRS) are enriched in basic and acidic residues. The disordered stretch occupies residues 1–25 (MTNQQHDHDFDHDRRSFASRTPVNN). A helical transmembrane segment spans residues 75–95 (VLMGVLIVITGLIGSFVFSLI).

This sequence belongs to the EccB family. Part of the ESX-3 / type VII secretion system (T7SS), which is composed of cytosolic and membrane components. The ESX-3 membrane complex is composed of EccB3, EccC3, EccD3 and EccE3.

Its subcellular location is the cell inner membrane. Its function is as follows. An ATPase. Part of the ESX-3 specialized secretion system, which is important for iron and zinc uptake or homeostasis. This Mycobacterium tuberculosis (strain CDC 1551 / Oshkosh) protein is ESX-3 secretion system ATPase EccB3.